A 292-amino-acid polypeptide reads, in one-letter code: Undecaprenyl-diphosphatase (292 aa).

7 helical membrane passes run 1-21 (MSLVSAALFGLVQALTEFLPV), 46-66 (FVTIIQAGTTLAVLIYFRADI), 88-108 (ARLGWYILLGTLPAALAGKLL), 114-134 (ALGNWVIAGSLVGLGLVLLAA), 192-212 (FLLSVPITLAAGAYKLWSTVP), 225-245 (VVGTVVSAVAGYLVIDWLLAW), and 253-273 (VFVVWRIAAGAAIAALILSGV).

The protein belongs to the UppP family.

It is found in the cell inner membrane. It carries out the reaction di-trans,octa-cis-undecaprenyl diphosphate + H2O = di-trans,octa-cis-undecaprenyl phosphate + phosphate + H(+). In terms of biological role, catalyzes the dephosphorylation of undecaprenyl diphosphate (UPP). Confers resistance to bacitracin. The polypeptide is Undecaprenyl-diphosphatase (Anaeromyxobacter dehalogenans (strain 2CP-C)).